A 329-amino-acid chain; its full sequence is Quinone oxidoreductase (329 aa).

A2 bears the N-acetylalanine mark. The residue at position 23 (K23) is an N6-acetyllysine. Residues Y53, 158–161, G181, H200, N229, 246–249, and 269–271 each bind NADP(+); these read SGGV, VGCR, and VSL. K296 carries the post-translational modification N6-succinyllysine.

This sequence belongs to the zinc-containing alcohol dehydrogenase family. Quinone oxidoreductase subfamily. As to quaternary structure, homotetramer.

It is found in the cytoplasm. It carries out the reaction 2 a quinone + NADPH + H(+) = 2 a 1,4-benzosemiquinone + NADP(+). Functionally, does not have alcohol dehydrogenase activity. Binds NADP and acts through a one-electron transfer process. Orthoquinones, such as 1,2-naphthoquinone or 9,10-phenanthrenequinone, are the best substrates (in vitro). May act in the detoxification of xenobiotics. Interacts with (AU)-rich elements (ARE) in the 3'-UTR of target mRNA species and enhances their stability. NADPH binding interferes with mRNA binding. This chain is Quinone oxidoreductase (Cryz), found in Rattus norvegicus (Rat).